Reading from the N-terminus, the 386-residue chain is 2-isopropylmalate synthase (386 aa).

Positions 12 to 265 (VRIFDTTLRD…EVNIKTYKLY (254 aa)) constitute a Pyruvate carboxyltransferase domain. Asp21, His203, His205, and Asn239 together coordinate a divalent metal cation.

The protein belongs to the alpha-IPM synthase/homocitrate synthase family. Homodimer. It depends on a divalent metal cation as a cofactor.

The catalysed reaction is 3-methyl-2-oxobutanoate + acetyl-CoA + H2O = (2S)-2-isopropylmalate + CoA + H(+). It participates in amino-acid biosynthesis; L-leucine biosynthesis; L-leucine from 3-methyl-2-oxobutanoate: step 1/4. In terms of biological role, catalyzes the condensation of the acetyl group of acetyl-CoA with 3-methyl-2-oxobutanoate (2-oxoisovalerate) to form 3-carboxy-3-hydroxy-4-methylpentanoate (2-isopropylmalate). Carries out the first step of the leucine biosynthesis pathway. This chain is 2-isopropylmalate synthase (leuA), found in Sulfurisphaera tokodaii (strain DSM 16993 / JCM 10545 / NBRC 100140 / 7) (Sulfolobus tokodaii).